A 176-amino-acid chain; its full sequence is Membrane-anchored junction protein (176 aa).

Over 1–151 the chain is Nuclear; it reads MSLKPFTYPF…QHNSPPPKER (151 aa). Positions 59–150 are disordered; it reads AVMRKRKHMD…LQHNSPPPKE (92 aa). The span at 95 to 107 shows a compositional bias: basic and acidic residues; it reads PPVETRRNRERKT. A compositionally biased stretch (polar residues) spans 108–120; the sequence is QQGLQETLASDIT. The helical transmembrane segment at 152–170 threads the bilayer; sequence AATGFFGFLSSLFPFRYFF. The Perinuclear space segment spans residues 171 to 176; it reads RKSSHS.

This sequence belongs to the MAJIN family. In terms of assembly, component of the MAJIN-TERB1-TERB2 complex, composed of MAJIN, TERB1 and TERB2.

It localises to the nucleus inner membrane. It is found in the chromosome. Its subcellular location is the telomere. Functionally, meiosis-specific telomere-associated protein involved in meiotic telomere attachment to the nucleus inner membrane, a crucial step for homologous pairing and synapsis. Component of the MAJIN-TERB1-TERB2 complex, which promotes telomere cap exchange by mediating attachment of telomeric DNA to the inner nuclear membrane and replacement of the protective cap of telomeric chromosomes: in early meiosis, the MAJIN-TERB1-TERB2 complex associates with telomeric DNA and the shelterin/telosome complex. During prophase, the complex matures and promotes release of the shelterin/telosome complex from telomeric DNA. In the complex, MAJIN acts as the anchoring subunit to the nucleus inner membrane. MAJIN shows DNA-binding activity, possibly for the stabilization of telomere attachment on the nucleus inner membrane. The chain is Membrane-anchored junction protein from Homo sapiens (Human).